Reading from the N-terminus, the 389-residue chain is Chorismate synthase (389 aa).

Positions 39 and 45 each coordinate NADP(+). FMN-binding positions include 130-132, 251-252, G296, 311-315, and R338; these read RSS, NA, and KPIPT.

Belongs to the chorismate synthase family. Homotetramer. FMNH2 serves as cofactor.

It carries out the reaction 5-O-(1-carboxyvinyl)-3-phosphoshikimate = chorismate + phosphate. It functions in the pathway metabolic intermediate biosynthesis; chorismate biosynthesis; chorismate from D-erythrose 4-phosphate and phosphoenolpyruvate: step 7/7. Its function is as follows. Catalyzes the anti-1,4-elimination of the C-3 phosphate and the C-6 proR hydrogen from 5-enolpyruvylshikimate-3-phosphate (EPSP) to yield chorismate, which is the branch point compound that serves as the starting substrate for the three terminal pathways of aromatic amino acid biosynthesis. This reaction introduces a second double bond into the aromatic ring system. The protein is Chorismate synthase of Oceanobacillus iheyensis (strain DSM 14371 / CIP 107618 / JCM 11309 / KCTC 3954 / HTE831).